Consider the following 247-residue polypeptide: 3-deoxy-manno-octulosonate cytidylyltransferase (247 aa).

This sequence belongs to the KdsB family.

The protein resides in the cytoplasm. The catalysed reaction is 3-deoxy-alpha-D-manno-oct-2-ulosonate + CTP = CMP-3-deoxy-beta-D-manno-octulosonate + diphosphate. Its pathway is nucleotide-sugar biosynthesis; CMP-3-deoxy-D-manno-octulosonate biosynthesis; CMP-3-deoxy-D-manno-octulosonate from 3-deoxy-D-manno-octulosonate and CTP: step 1/1. It functions in the pathway bacterial outer membrane biogenesis; lipopolysaccharide biosynthesis. Functionally, activates KDO (a required 8-carbon sugar) for incorporation into bacterial lipopolysaccharide in Gram-negative bacteria. This is 3-deoxy-manno-octulosonate cytidylyltransferase from Bdellovibrio bacteriovorus (strain ATCC 15356 / DSM 50701 / NCIMB 9529 / HD100).